Consider the following 99-residue polypeptide: Nucleoid-associated protein EbfC (99 aa).

It belongs to the YbaB/EbfC family. As to quaternary structure, homodimer.

Its subcellular location is the cytoplasm. The protein resides in the nucleoid. In terms of biological role, binds to DNA and alters its conformation. May be involved in regulation of gene expression, nucleoid organization and DNA protection. The protein is Nucleoid-associated protein EbfC of Borrelia hermsii (strain HS1 / DAH).